The chain runs to 142 residues: Alpha-lactalbumin (142 aa).

Positions 1–19 (MMSFVSLLLVGILFHATQA) are cleaved as a signal peptide. The 123-residue stretch at 20 to 142 (EQLTKCEVFR…KLDQWLCEKL (123 aa)) folds into the C-type lysozyme domain. 4 cysteine pairs are disulfide-bonded: C25/C139, C47/C130, C80/C96, and C92/C110. N64 and N93 each carry an N-linked (GlcNAc...) asparagine glycan. Residues K98, D101, D103, D106, and D107 each coordinate Ca(2+).

It belongs to the glycosyl hydrolase 22 family. In terms of assembly, lactose synthase (LS) is a heterodimer of a catalytic component, beta1,4-galactosyltransferase (beta4Gal-T1) and a regulatory component, alpha-lactalbumin (LA). Mammary gland specific. Secreted in milk.

It is found in the secreted. Regulatory subunit of lactose synthase, changes the substrate specificity of galactosyltransferase in the mammary gland making glucose a good acceptor substrate for this enzyme. This enables LS to synthesize lactose, the major carbohydrate component of milk. In other tissues, galactosyltransferase transfers galactose onto the N-acetylglucosamine of the oligosaccharide chains in glycoproteins. This chain is Alpha-lactalbumin (LALBA), found in Bos mutus grunniens (Wild yak).